The sequence spans 296 residues: Protoheme IX farnesyltransferase (296 aa).

9 helical membrane-spanning segments follow: residues 11–31 (PGII…AAQG), 35–55 (YPLF…GCVF), 84–104 (VTLV…YVAA), 107–127 (LAMW…SLYM), 132–152 (VYGT…GYCA), 162–182 (LILL…IAIF), 208–228 (ITLY…GGYA), 229–249 (GYKY…MALS), and 264–284 (LFVF…VDSM).

This sequence belongs to the UbiA prenyltransferase family. Protoheme IX farnesyltransferase subfamily.

The protein resides in the cell inner membrane. It carries out the reaction heme b + (2E,6E)-farnesyl diphosphate + H2O = Fe(II)-heme o + diphosphate. It participates in porphyrin-containing compound metabolism; heme O biosynthesis; heme O from protoheme: step 1/1. Converts heme B (protoheme IX) to heme O by substitution of the vinyl group on carbon 2 of heme B porphyrin ring with a hydroxyethyl farnesyl side group. In Pectobacterium atrosepticum (strain SCRI 1043 / ATCC BAA-672) (Erwinia carotovora subsp. atroseptica), this protein is Protoheme IX farnesyltransferase.